A 1312-amino-acid polypeptide reads, in one-letter code: Beta-N-acetylhexosaminidase (1312 aa).

Residues 1-33 form the signal peptide; that stretch reads MKHEKQQRFSIRKYAVGAASVLIGFAFQAQTVA. The segment covering 38 to 59 has biased composition (polar residues); the sequence is TPTTTENQPTIHTVSDSPQSSE. The tract at residues 38–178 is disordered; it reads TPTTTENQPT…ATEAGKERAA (141 aa). Basic and acidic residues predominate over residues 118 to 177; sequence AEKETANKKAEEASPKKEEAKEVDSKESNTDKTDKDKPAKKDEAKAEADKPATEAGKERA. Catalytic domain stretches follow at residues 176-616 and 621-1046; these read RAAT…TPEA and EAKR…PAVT. 2 consecutive G5 domains span residues 1059 to 1138 and 1150 to 1230; these read NVET…GAPV and TTEV…GTMV. The interval 1244–1290 is disordered; sequence EEKPKLEIPSQPAPSTAPAEESKVLPQDPAPVVTEKKLPETGTHDSA. Over residues 1277-1286 the composition is skewed to basic and acidic residues; sequence TEKKLPETGT. The LPXTG sorting signal signature appears at 1281 to 1285; the sequence is LPETG. The residue at position 1284 (Thr1284) is a Pentaglycyl murein peptidoglycan amidated threonine. Positions 1285 to 1312 are cleaved as a propeptide — removed by sortase; it reads GTHDSAGLVVAGLMSTLAAYGLTKRKED.

It belongs to the glycosyl hydrolase 20 family.

It localises to the secreted. The protein resides in the cell wall. It catalyses the reaction Hydrolysis of terminal non-reducing N-acetyl-D-hexosamine residues in N-acetyl-beta-D-hexosaminides.. This chain is Beta-N-acetylhexosaminidase (strH), found in Streptococcus pneumoniae serotype 4 (strain ATCC BAA-334 / TIGR4).